The sequence spans 453 residues: Na(+)/H(+) antiporter NhaA 2 (453 aa).

Helical transmembrane passes span 23 to 43, 74 to 94, 111 to 131, 139 to 159, 168 to 188, 191 to 211, 214 to 234, 235 to 255, 316 to 336, 345 to 365, 386 to 406, and 419 to 439; these read FLHI…AALI, LHFW…GMEI, LPMA…LSFG, GWAV…ALLG, VFLL…IAFF, GGLD…VIGL, IGVG…LGIL, LTGA…PVTA, VAFG…LSGV, WVMI…IVSV, IVLV…IANL, and LGVL…GVWS.

The protein belongs to the NhaA Na(+)/H(+) (TC 2.A.33) antiporter family.

The protein localises to the cell inner membrane. It carries out the reaction Na(+)(in) + 2 H(+)(out) = Na(+)(out) + 2 H(+)(in). Its function is as follows. Na(+)/H(+) antiporter that extrudes sodium in exchange for external protons. This chain is Na(+)/H(+) antiporter NhaA 2, found in Pseudomonas putida (strain ATCC 700007 / DSM 6899 / JCM 31910 / BCRC 17059 / LMG 24140 / F1).